The sequence spans 476 residues: tRNA-2-methylthio-N(6)-dimethylallyladenosine synthase (476 aa).

Residues 1–14 are compositionally biased toward basic and acidic residues; the sequence is MTEVVHLHMPEEAR. The disordered stretch occupies residues 1 to 20; the sequence is MTEVVHLHMPEEARATQSRD. The 122-residue stretch at 26–147 folds into the MTTase N-terminal domain; the sequence is RRYYVWTVGC…APNPIYQLEE (122 aa). Residues Cys35, Cys71, Cys105, Cys170, Cys174, and Cys177 each contribute to the [4Fe-4S] cluster site. In terms of domain architecture, Radical SAM core spans 156–390; it reads DHPPVSVHVP…ERLQEQIAAE (235 aa). Residues 393-453 form the TRAM domain; sequence ARFLHQTVEV…PWSLQGVLAR (61 aa).

The protein belongs to the methylthiotransferase family. MiaB subfamily. In terms of assembly, monomer. [4Fe-4S] cluster serves as cofactor.

Its subcellular location is the cytoplasm. The enzyme catalyses N(6)-dimethylallyladenosine(37) in tRNA + (sulfur carrier)-SH + AH2 + 2 S-adenosyl-L-methionine = 2-methylsulfanyl-N(6)-dimethylallyladenosine(37) in tRNA + (sulfur carrier)-H + 5'-deoxyadenosine + L-methionine + A + S-adenosyl-L-homocysteine + 2 H(+). Functionally, catalyzes the methylthiolation of N6-(dimethylallyl)adenosine (i(6)A), leading to the formation of 2-methylthio-N6-(dimethylallyl)adenosine (ms(2)i(6)A) at position 37 in tRNAs that read codons beginning with uridine. The polypeptide is tRNA-2-methylthio-N(6)-dimethylallyladenosine synthase (Roseiflexus sp. (strain RS-1)).